A 519-amino-acid polypeptide reads, in one-letter code: Sorting nexin-2 (519 aa).

Disordered regions lie at residues 1–20 and 30–103; these read MAAEREPPPLGDGKPTDFEE and STVS…VTPV. Low complexity-rich tracts occupy residues 30-44 and 93-103; these read STVSTLESSPSSPDP and SSETSPAVTPV. At serine 97 the chain carries Phosphoserine. Residues threonine 101 and threonine 104 each carry the phosphothreonine modification. Residues serine 117 and serine 119 each carry the phosphoserine modification. The 130-residue stretch at 140–269 folds into the PX domain; sequence FDIEIGVSDP…QFLESSELPR (130 aa). Arginine 183, serine 185, lysine 211, and arginine 235 together coordinate a 1,2-diacyl-sn-glycero-3-phospho-(1D-myo-inositol-3-phosphate). Serine 185 is modified (phosphoserine). Residues 260-519 are interaction with RhoG; that stretch reads QFLESSELPR…AFLPEAKAIA (260 aa). Serine 277 carries the post-translational modification Phosphoserine. The interval 278-295 is membrane-binding amphipathic helix; the sequence is GAGILRMVNKAADAVNKM. Residues 299–519 form the BAR domain; sequence MNESDAWFEE…AFLPEAKAIA (221 aa). Lysine 469 bears the N6-acetyllysine mark.

The protein belongs to the sorting nexin family. As to quaternary structure, predominantly forms heterodimers with BAR domain-containing sorting nexins SNX5, SNX6 and SNX32; can self-associate to form homodimers. The heterodimers are proposed to self-assemble into helical arrays on the membrane to stabilize and expand local membrane curvature underlying endosomal tubule formation. Thought to be a component of the originally described retromer complex (also called SNX-BAR retromer) which is a pentamer containing the heterotrimeric retromer cargo-selective complex (CSC), also decribed as vacuolar protein sorting subcomplex (VPS) and a heterodimeric membrane-deforming subcomplex formed between SNX1 or SNX2 and SNX5 or SNX6 (also called SNX-BAR subcomplex); the respective CSC and SNX-BAR subcomplexes associate with low affinity. Interacts with SNX5, SNX6, SNX32, VPS26A, VPS29, VPS35, FNBP1, KALRN, RHOG (GDP-bound form).

The protein localises to the early endosome membrane. It localises to the cell projection. Its subcellular location is the lamellipodium. Functionally, involved in several stages of intracellular trafficking. Interacts with membranes containing phosphatidylinositol 3-phosphate (PtdIns(3P)) or phosphatidylinositol 3,5-bisphosphate (PtdIns(3,5)P2). Acts in part as component of the retromer membrane-deforming SNX-BAR subcomplex. The SNX-BAR retromer mediates retrograde transport of cargo proteins from endosomes to the trans-Golgi network (TGN) and is involved in endosome-to-plasma membrane transport for cargo protein recycling. The SNX-BAR subcomplex functions to deform the donor membrane into a tubular profile called endosome-to-TGN transport carrier (ETC). Can sense membrane curvature and has in vitro vesicle-to-membrane remodeling activity. Required for retrograde endosome-to-TGN transport of TGN38. Promotes KALRN- and RHOG-dependent but retromer-independent membrane remodeling such as lamellipodium formation; the function is dependent on GEF activity of KALRN. The protein is Sorting nexin-2 (SNX2) of Bos taurus (Bovine).